We begin with the raw amino-acid sequence, 71 residues long: Brevinin-1SN2 (71 aa).

An N-terminal signal peptide occupies residues 1-22; it reads MFTMKKSLLLIFFLGTINLSLC. Positions 23-45 are cleaved as a propeptide — removed in mature form; sequence EEERNADEDEKRDGDDESDVEVQ. Cysteines 65 and 71 form a disulfide.

This sequence belongs to the frog skin active peptide (FSAP) family. Brevinin subfamily. As to expression, expressed by the skin glands.

It localises to the secreted. Antimicrobial peptide. Active against a variety of Gram-negative and Gram-positive bacterial strains. Active against fungus C.glabrata 090902 and C.albicans ATCC 10231. Shows hemolytic activity against human erythrocytes. The sequence is that of Brevinin-1SN2 from Sylvirana spinulosa (Fine-spined frog).